A 289-amino-acid chain; its full sequence is Phosphatidylglycerol--prolipoprotein diacylglyceryl transferase (289 aa).

7 helical membrane passes run 23-43, 61-81, 99-119, 125-145, 199-219, 226-246, and 259-279; these read ALHW…WLAV, LLYM…VLFY, GGMS…WFAH, FFQV…AGRL, SQLY…NLFI, GSVS…TEFF, and LFSM…LMMV. Arg144 is an a 1,2-diacyl-sn-glycero-3-phospho-(1'-sn-glycerol) binding site.

The protein belongs to the Lgt family.

The protein localises to the cell inner membrane. It catalyses the reaction L-cysteinyl-[prolipoprotein] + a 1,2-diacyl-sn-glycero-3-phospho-(1'-sn-glycerol) = an S-1,2-diacyl-sn-glyceryl-L-cysteinyl-[prolipoprotein] + sn-glycerol 1-phosphate + H(+). Its pathway is protein modification; lipoprotein biosynthesis (diacylglyceryl transfer). Functionally, catalyzes the transfer of the diacylglyceryl group from phosphatidylglycerol to the sulfhydryl group of the N-terminal cysteine of a prolipoprotein, the first step in the formation of mature lipoproteins. The sequence is that of Phosphatidylglycerol--prolipoprotein diacylglyceryl transferase from Pectobacterium carotovorum subsp. carotovorum (strain PC1).